We begin with the raw amino-acid sequence, 468 residues long: BTB/POZ domain-containing protein 17 (468 aa).

The first 16 residues, 1-16, serve as a signal peptide directing secretion; sequence MRRFCVVPLLLVLVEA. A BTB domain is found at 51-120; that stretch reads TDTILRIRTA…FYCGEISVNL (70 aa). Residues 159–259 enclose the BACK domain; it reads VVSWYHYALR…ISPSQLFQIQ (101 aa).

It is found in the secreted. The polypeptide is BTB/POZ domain-containing protein 17 (btbd17) (Xenopus tropicalis (Western clawed frog)).